A 445-amino-acid chain; its full sequence is MVKKRLSSSDNVFKFEIPSNSKTSAEAPHSSTDSPSSVFLSSEAENGAEDRRRVSKSPTAQSPTSSVEAESPDQKRSLGLWSKSSFDGSSLLSDKNDCKTESKTDSKTERKKSSSSSQYKANMHFHKLFLDVPTEEPLRQSFTCALQKEILYQGKLFVSENWICFHSKVFGKDTKISIPAFSVTLIKKTKTALLVPNALIIATVTDRYIFVSLLSRDSTYKLIKSVCGHLENTSVGNSPNPSSAENSFRADRPSSLPLDFNDEFSDLDGVVRQRRQDLEGYSSSGSQTPESENSRDFHVTESQTVLNVTKGETKPPRTDAHGSRAPDGKAKILPAHGQSETIGILHKMESRKCPTLHHILIVYAIIVCALIISTFYMRYRINTLEERLGTLTSIMDPHSTEQTAPSGLGSQMQLNVEVLCQELTANIVKLEKIQNNLQKLLENGD.

M1 is subject to N-acetylmethionine. The interval M1–Q118 is disordered. 2 stretches are compositionally biased toward polar residues: residues P18–A44 and K56–E68. Over residues S82–S93 the composition is skewed to low complexity. Residues D94 to K112 show a composition bias toward basic and acidic residues. One can recognise a GRAM domain in the interval M123–K190. A compositionally biased stretch (polar residues) spans T233–N246. The disordered stretch occupies residues T233–R252. A phosphoserine mark is found at S238, S255, and S265. Residues D277 to K331 form a disordered region. The span at Y281 to S291 shows a compositional bias: polar residues. Residues G311–A330 show a composition bias toward basic and acidic residues.

In Mus musculus (Mouse), this protein is GRAM domain-containing protein 2B (Gramd2b).